Consider the following 140-residue polypeptide: Ribosome-binding factor A (140 aa).

A disordered region spans residues 1-23; that stretch reads MLRDRNRSGVRGGAEGPSQRQRR.

This sequence belongs to the RbfA family. As to quaternary structure, monomer. Binds 30S ribosomal subunits, but not 50S ribosomal subunits or 70S ribosomes.

It localises to the cytoplasm. In terms of biological role, one of several proteins that assist in the late maturation steps of the functional core of the 30S ribosomal subunit. Associates with free 30S ribosomal subunits (but not with 30S subunits that are part of 70S ribosomes or polysomes). Required for efficient processing of 16S rRNA. May interact with the 5'-terminal helix region of 16S rRNA. The sequence is that of Ribosome-binding factor A from Acidiphilium cryptum (strain JF-5).